Consider the following 568-residue polypeptide: 2-succinyl-5-enolpyruvyl-6-hydroxy-3-cyclohexene-1-carboxylate synthase (568 aa).

The protein belongs to the TPP enzyme family. MenD subfamily. In terms of assembly, homodimer. Mg(2+) serves as cofactor. The cofactor is Mn(2+). It depends on thiamine diphosphate as a cofactor.

It catalyses the reaction isochorismate + 2-oxoglutarate + H(+) = 5-enolpyruvoyl-6-hydroxy-2-succinyl-cyclohex-3-ene-1-carboxylate + CO2. Its pathway is quinol/quinone metabolism; 1,4-dihydroxy-2-naphthoate biosynthesis; 1,4-dihydroxy-2-naphthoate from chorismate: step 2/7. It functions in the pathway quinol/quinone metabolism; menaquinone biosynthesis. Its function is as follows. Catalyzes the thiamine diphosphate-dependent decarboxylation of 2-oxoglutarate and the subsequent addition of the resulting succinic semialdehyde-thiamine pyrophosphate anion to isochorismate to yield 2-succinyl-5-enolpyruvyl-6-hydroxy-3-cyclohexene-1-carboxylate (SEPHCHC). In Actinobacillus succinogenes (strain ATCC 55618 / DSM 22257 / CCUG 43843 / 130Z), this protein is 2-succinyl-5-enolpyruvyl-6-hydroxy-3-cyclohexene-1-carboxylate synthase.